A 191-amino-acid polypeptide reads, in one-letter code: GDP-mannose pyrophosphatase (191 aa).

GDP-alpha-D-mannose contacts are provided by residues Y17, K38–E40, R67, and A85–L87. A Nudix hydrolase domain is found at D43–L180. Mg(2+) is bound by residues A85, E100, and E104. Positions G86–G106 match the Nudix box motif. GDP-alpha-D-mannose is bound by residues E104, E127, D150–E151, and K176. E151 serves as a coordination point for Mg(2+).

This sequence belongs to the Nudix hydrolase family. NudK subfamily. In terms of assembly, homodimer. Requires Mg(2+) as cofactor.

It carries out the reaction GDP-alpha-D-mannose + H2O = alpha-D-mannose 1-phosphate + GMP + 2 H(+). Functionally, nucleoside diphosphate sugar hydrolase that hydrolyzes GDP-mannose as its preferred substrate, yielding GMP and mannose-1-phosphate. The chain is GDP-mannose pyrophosphatase (nudK) from Escherichia coli (strain UTI89 / UPEC).